Consider the following 503-residue polypeptide: Legumin J (503 aa).

The signal sequence occupies residues 1–22; it reads MSKPFLSLLSLSLLLFASACLA. 2 cysteine pairs are disulfide-bonded: Cys33/Cys66 and Cys109/Cys329. Positions 38–257 constitute a Cupin type-1 1 domain; the sequence is INALEPDHRV…TFNTEEDTAK (220 aa). Disordered regions lie at residues 111-140, 185-235, and 253-323; these read ETYE…RRFR, FYLG…EGNS, and EDTA…RKNG. A compositionally biased stretch (low complexity) spans 118–129; the sequence is SSQSRQESRQQQ. 2 stretches are compositionally biased toward basic and acidic residues: residues 254 to 268 and 282 to 300; these read DTAK…ERSQ and KGKE…HREE. The span at 301–312 shows a compositional bias: acidic residues; it reads KEEEEEEEEDEE. A compositionally biased stretch (basic and acidic residues) spans 313-323; it reads EKQRSEERKNG. Residues 335-482 enclose the Cupin type-1 2 domain; that stretch reads ENIADAARAD…AFGLRQRQVT (148 aa).

This sequence belongs to the 11S seed storage protein (globulins) family. In terms of assembly, hexamer; each subunit is composed of an acidic and a basic chain derived from a single precursor and linked by a disulfide bond.

Its function is as follows. This protein found in the seeds of many leguminous and non-leguminous plants is the source of sulfur-containing amino acids in seed meals. This Pisum sativum (Garden pea) protein is Legumin J (LEGJ).